Here is a 404-residue protein sequence, read N- to C-terminus: Cysteine desulfurase IscS (404 aa).

Residues 75–76, N155, Q183, and 203–205 contribute to the pyridoxal 5'-phosphate site; these read AT and TSH. K206 carries the N6-(pyridoxal phosphate)lysine modification. Position 243 (T243) interacts with pyridoxal 5'-phosphate. Catalysis depends on C328, which acts as the Cysteine persulfide intermediate. C328 lines the [2Fe-2S] cluster pocket.

This sequence belongs to the class-V pyridoxal-phosphate-dependent aminotransferase family. NifS/IscS subfamily. Homodimer. Forms a heterotetramer with IscU, interacts with other sulfur acceptors. Requires pyridoxal 5'-phosphate as cofactor.

The protein localises to the cytoplasm. The enzyme catalyses (sulfur carrier)-H + L-cysteine = (sulfur carrier)-SH + L-alanine. The protein operates within cofactor biosynthesis; iron-sulfur cluster biosynthesis. In terms of biological role, master enzyme that delivers sulfur to a number of partners involved in Fe-S cluster assembly, tRNA modification or cofactor biosynthesis. Catalyzes the removal of elemental sulfur atoms from cysteine to produce alanine. Functions as a sulfur delivery protein for Fe-S cluster synthesis onto IscU, an Fe-S scaffold assembly protein, as well as other S acceptor proteins. In Photobacterium profundum (strain SS9), this protein is Cysteine desulfurase IscS.